Here is a 322-residue protein sequence, read N- to C-terminus: Ribosome biogenesis protein RLP7 (322 aa).

Residues 1–16 are compositionally biased toward polar residues; sequence MSSTQDSKAQTLNSNP. Residues 1 to 52 are disordered; that stretch reads MSSTQDSKAQTLNSNPEILLRKRRNADRTRIERQELAKKKREEQIKKKRSNK. Ser-2 carries the N-acetylserine modification. Residue Ser-14 is modified to Phosphoserine. A compositionally biased stretch (basic and acidic residues) spans 26–45; that stretch reads ADRTRIERQELAKKKREEQI. The residue at position 120 (Thr-120) is a Phosphothreonine. At Ser-278 the chain carries Phosphoserine.

It belongs to the universal ribosomal protein uL30 family.

The protein resides in the nucleus. It is found in the nucleolus. Functionally, involved in the biogenesis of the 60S ribosomal subunit. May act as a specificity factor that binds precursor rRNAs and tethers the enzymes that carry out the early 5' to 3' exonucleolytic reactions that generate the mature rRNAs. The chain is Ribosome biogenesis protein RLP7 (RLP7) from Saccharomyces cerevisiae (strain ATCC 204508 / S288c) (Baker's yeast).